The chain runs to 1481 residues: RNA helicase aquarius (1481 aa).

Positions 1–416 (MAAPAQPKKI…LVSRHERRIS (416 aa)) are helical region with structural similarity to ARM repeat domains. Residues 417–1481 (QIQQLNQMPL…DAESVPTETE (1065 aa)) form a required for assembly of the IB complex region. A disordered region spans residues 754–773 (RSGKGKKRKDADGEEDDTEE). Residues Gln-801, Gln-806, and 826 to 831 (GTGKTD) contribute to the ATP site. Lys-1055 bears the N6-acetyllysine mark. Residues 1396–1414 (EEGEEGQSQETEMEAEEET) show a composition bias toward acidic residues. The disordered stretch occupies residues 1396–1481 (EEGEEGQSQE…DAESVPTETE (86 aa)). The segment covering 1418-1448 (QGNLTPSPADASLSQETPAAQPDCSSQTEDT) has biased composition (polar residues). Positions 1455–1468 (ATAAEPVSAAAEAA) are enriched in low complexity.

It belongs to the CWF11 family. Identified in the spliceosome C complex. Component of the XAB2 complex, a multimeric protein complex composed of XAB2, PRPF19, AQR, ZNF830, ISY1, and PPIE. Identified in a pentameric intron-binding (IB) complex composed of AQR, XAB2, ISY1, ZNF830 and PPIE that is incorporated into the spliceosome as a preassembled complex. The IB complex does not contain PRPF19. Within the spliceosome, interacts with SNRPA1, SF3B1, SF3B3, SF3A1 and SF3A2.

Its subcellular location is the nucleus. The protein resides in the nucleoplasm. It carries out the reaction ATP + H2O = ADP + phosphate + H(+). Functionally, involved in pre-mRNA splicing as component of the spliceosome. Intron-binding spliceosomal protein required to link pre-mRNA splicing and snoRNP (small nucleolar ribonucleoprotein) biogenesis. Plays a key role in position-dependent assembly of intron-encoded box C/D small snoRNP, splicing being required for snoRNP assembly. May act by helping the folding of the snoRNA sequence. Binds to intron of pre-mRNAs in a sequence-independent manner, contacting the region between snoRNA and the branchpoint of introns (40 nucleotides upstream of the branchpoint) during the late stages of splicing. Has ATP-dependent RNA helicase activity and can unwind double-stranded RNA molecules with a 3' overhang (in vitro). The protein is RNA helicase aquarius (Aqr) of Mus musculus (Mouse).